Here is a 66-residue protein sequence, read N- to C-terminus: Putative alpha-neurotoxin RjAa44 (66 aa).

An LCN-type CS-alpha/beta domain is found at 1-60; that stretch reads KEGYPVDWGNCKYECMSDAYCKDLCADRKAKSGYCYKLNWSCYCEGLPDDSPIKTNGHCR. Intrachain disulfides connect cysteine 11/cysteine 59, cysteine 15/cysteine 35, cysteine 21/cysteine 42, and cysteine 25/cysteine 44.

This sequence belongs to the long (4 C-C) scorpion toxin superfamily. Sodium channel inhibitor family. Alpha subfamily. As to expression, expressed by the venom gland.

Its subcellular location is the secreted. Alpha toxins bind voltage-independently at site-3 of sodium channels (Nav) and inhibit the inactivation of the activated channels, thereby blocking neuronal transmission. This Rhopalurus junceus (Caribbean blue scorpion) protein is Putative alpha-neurotoxin RjAa44.